The following is a 431-amino-acid chain: Keratin, type I cytoskeletal 20 (431 aa).

The disordered stretch occupies residues 1-23; that stretch reads MDFSRQSFHRSLSSSSQGPALSM. The tract at residues 1-76 is head; it reads MDFSRQSFHR…SNGSDLFGGN (76 aa). The residue at position 13 (S13) is a Phosphoserine; by MAPKAPK2, MAPKAPK3 and PKC. Phosphoserine is present on residues S16 and S26. The segment at 77 to 112 is coil 1A; the sequence is GKLAMQNLNDRLANYLEKVRSLEQSNSRLEAQIKQW. Residues 77 to 388 form the IF rod domain; the sequence is GKLAMQNLND…RLLEGEDIKT (312 aa). The linker 1 stretch occupies residues 113 to 130; that stretch reads YETNAPSTIRDYSSYYAQ. Residues 131–222 are coil 1B; sequence IKELQNQVKD…KEHQEEVEVL (92 aa). Residues 223–245 form a linker 12 region; sequence RRQLGNNVNVEVDAAPGLNLGEI. The coil 2 stretch occupies residues 246-384; that stretch reads MNEMRQRYEV…ATYRRLLEGE (139 aa). The tail stretch occupies residues 385–431; the sequence is DIKTTEYQLSTLEMKDIKKTRKIKTVVEEVVDGKVVSSEVKEIEESV.

This sequence belongs to the intermediate filament family. In terms of assembly, heterotetramer of two type I and two type II keratins. Associates with KRT8. In terms of processing, hyperphosphorylation at Ser-13 occurs during the early stages of apoptosis but becomes less prominent during the later stages. Phosphorylation at Ser-13 also increases in response to stress brought on by cell injury. Proteolytically cleaved by caspases during apoptosis. Cleavage occurs at Asp-235. In terms of tissue distribution, expressed at low levels in the more differentiated suprabasal regions of the small intestine, and at higher levels in the colon, mainly in the upper region and in scattered cells throughout the remaining epithelium. Also expressed in epithelial cells of bladder, ileum and stomach and at lower levels in pancreas and earskin. The phosphorylated form is nearly exclusively expressed in goblet cells of the small intestine and in the lumen-proximal cells of the colon (at protein level). Also expressed in jejunum and duodenum.

Its function is as follows. Plays a significant role in maintaining keratin filament organization in intestinal epithelia. When phosphorylated, plays a role in the secretion of mucin in the small intestine. In Mus musculus (Mouse), this protein is Keratin, type I cytoskeletal 20.